The primary structure comprises 130 residues: Small ribosomal subunit protein uS11 (130 aa).

The protein belongs to the universal ribosomal protein uS11 family. As to quaternary structure, part of the 30S ribosomal subunit. Interacts with proteins S7 and S18. Binds to IF-3.

Located on the platform of the 30S subunit, it bridges several disparate RNA helices of the 16S rRNA. Forms part of the Shine-Dalgarno cleft in the 70S ribosome. The sequence is that of Small ribosomal subunit protein uS11 from Prochlorococcus marinus (strain MIT 9313).